Consider the following 668-residue polypeptide: Eukaryotic translation initiation factor 3 subunit L (668 aa).

The span at 1–17 (MVADASQQGQSNGAAFN) shows a compositional bias: polar residues. The segment at 1–42 (MVADASQQGQSNGAAFNQQQQYQQQQQRQLFGGEEEFGDEEE) is disordered. Residues 18–32 (QQQQYQQQQQRQLFG) show a composition bias toward low complexity. Acidic residues predominate over residues 33 to 42 (GEEEFGDEEE). In terms of domain architecture, PCI spans 358–552 (SFTHILVFIM…QVVNTSDLDF (195 aa)). Residues 625-668 (AGVKAGPPAFSQRSGGAGRSSVNKSAPAPAGAWGSSKPQPSVTA) are disordered. The segment covering 648-662 (KSAPAPAGAWGSSKP) has biased composition (low complexity).

Belongs to the eIF-3 subunit L family. In terms of assembly, component of the eukaryotic translation initiation factor 3 (eIF-3) complex.

The protein localises to the cytoplasm. In terms of biological role, component of the eukaryotic translation initiation factor 3 (eIF-3) complex, which is involved in protein synthesis of a specialized repertoire of mRNAs and, together with other initiation factors, stimulates binding of mRNA and methionyl-tRNAi to the 40S ribosome. The eIF-3 complex specifically targets and initiates translation of a subset of mRNAs involved in cell proliferation. This Mycosarcoma maydis (Corn smut fungus) protein is Eukaryotic translation initiation factor 3 subunit L.